Consider the following 313-residue polypeptide: UPF0761 membrane protein VV0203 (313 aa).

The next 6 membrane-spanning stretches (helical) occupy residues 41–61 (YLAY…LSIL), 104–124 (MTAV…SNID), 139–159 (AVFS…LVGA), 185–205 (LLRW…YLLV), 215–235 (AVVG…GFAA), and 249–269 (ALAA…IVLI). A disordered region spans residues 293–313 (LPNNDTELEKDTQRDRFDSES). A compositionally biased stretch (basic and acidic residues) spans 299–313 (ELEKDTQRDRFDSES).

Belongs to the UPF0761 family.

It is found in the cell inner membrane. The polypeptide is UPF0761 membrane protein VV0203 (Vibrio vulnificus (strain YJ016)).